A 145-amino-acid chain; its full sequence is Basic phospholipase A2 beta-bungarotoxin A2 chain (145 aa).

A signal peptide spans 1-17 (MLIFLWCGAVCVSLLGA). Residues 18 to 25 (ANIPPHPL) constitute a propeptide that is removed on maturation. 6 disulfides stabilise this stretch: cysteine 52-cysteine 144, cysteine 54-cysteine 70, cysteine 69-cysteine 125, cysteine 76-cysteine 118, cysteine 86-cysteine 111, and cysteine 104-cysteine 116. Ca(2+) is bound by residues tyrosine 53, glycine 55, and glycine 57. Residue histidine 73 is part of the active site. Aspartate 74 serves as a coordination point for Ca(2+). Residue aspartate 119 is part of the active site.

This sequence belongs to the phospholipase A2 family. Group I subfamily. D49 sub-subfamily. Heterodimer; disulfide-linked. The A chains have phospholipase A2 activity and the B chains show homology with the basic protease inhibitors. The A2 chain is found in beta-3 and beta-4 bungarotoxins. Requires Ca(2+) as cofactor. As to expression, expressed by the venom gland.

It localises to the secreted. It catalyses the reaction a 1,2-diacyl-sn-glycero-3-phosphocholine + H2O = a 1-acyl-sn-glycero-3-phosphocholine + a fatty acid + H(+). Functionally, snake venom phospholipase A2 (PLA2) that inhibits neuromuscular transmission by blocking acetylcholine release from the nerve termini. PLA2 catalyzes the calcium-dependent hydrolysis of the 2-acyl groups in 3-sn-phosphoglycerides. This Bungarus multicinctus (Many-banded krait) protein is Basic phospholipase A2 beta-bungarotoxin A2 chain.